An 810-amino-acid polypeptide reads, in one-letter code: LPS-assembly protein LptD (810 aa).

Residues 1-29 form the signal peptide; it reads MTKWTLGYSYPIALTISLIPALTPAIVQA.

Belongs to the LptD family. Component of the lipopolysaccharide transport and assembly complex. Interacts with LptE and LptA.

Its subcellular location is the cell outer membrane. In terms of biological role, together with LptE, is involved in the assembly of lipopolysaccharide (LPS) at the surface of the outer membrane. This Aeromonas salmonicida (strain A449) protein is LPS-assembly protein LptD.